Reading from the N-terminus, the 628-residue chain is Probable potassium transport system protein Kup (628 aa).

12 helical membrane passes run A12–S32, L57–V77, W106–T126, I141–F161, F174–I194, L219–A239, W253–L273, L295–F315, I343–F363, L369–V389, A402–L422, and L425–S445.

The protein belongs to the HAK/KUP transporter (TC 2.A.72) family.

Its subcellular location is the cell inner membrane. It carries out the reaction K(+)(in) + H(+)(in) = K(+)(out) + H(+)(out). Functionally, transport of potassium into the cell. Likely operates as a K(+):H(+) symporter. The polypeptide is Probable potassium transport system protein Kup (Azorhizobium caulinodans (strain ATCC 43989 / DSM 5975 / JCM 20966 / LMG 6465 / NBRC 14845 / NCIMB 13405 / ORS 571)).